The sequence spans 161 residues: uncharacterized protein (161 aa).

The RING-type zinc-finger motif lies at 72–134 (CAICLDNLQN…EAQQTCPTCR (63 aa)). Residues 140 to 161 (DKEVEEEERQRNLEELHDSMYG) are disordered.

This is an uncharacterized protein from Caenorhabditis elegans.